The following is a 314-amino-acid chain: Olfactory receptor 52B4 (314 aa).

Over 1–27 the chain is Extracellular; it reads MPTVNHSGTSHTVFHLLGIPGLQDQHM. N-linked (GlcNAc...) asparagine glycosylation is present at asparagine 5. A helical membrane pass occupies residues 28-48; sequence WISIPFFISYVTALLGNSLLI. Residues 49–56 lie on the Cytoplasmic side of the membrane; sequence FIILTKRS. The chain crosses the membrane as a helical span at residues 57–77; that stretch reads LHEPMYLFLCMLAGADIVLST. Residues 78–101 lie on the Extracellular side of the membrane; it reads CTIPQALAIFWFRAGDISLDRCIT. Cysteine 99 and cysteine 191 are joined by a disulfide. Residues 102-122 form a helical membrane-spanning segment; it reads QLFFIHSTFISESGILLVMAF. At 123–141 the chain is on the cytoplasmic side; that stretch reads DHYIAICYPLRYTTILTNA. Residues 142–162 traverse the membrane as a helical segment; it reads LIKKICVTVSLRSYGTIFPII. Over 163–198 the chain is Extracellular; that stretch reads FLLKRLTFCQNNIIPHTFCEHIGLAKYACNDIRINI. Residues 199–219 traverse the membrane as a helical segment; the sequence is WYGFSILMSTVVLDVVLIFIS. The Cytoplasmic segment spans residues 220 to 239; sequence YMLILHAVFHMPSPDACHKA. A helical transmembrane segment spans residues 240–260; the sequence is LNTFGSHVCIIILFYGSGIFT. Topologically, residues 261-275 are extracellular; it reads ILTQRFGRHIPPCIH. The helical transmembrane segment at 276-296 threads the bilayer; that stretch reads IPLANVCILAPPMLNPIIYGI. Residues 297–314 lie on the Cytoplasmic side of the membrane; the sequence is KTKQIQEQVVQFLFIKQK.

Belongs to the G-protein coupled receptor 1 family.

The protein localises to the cell membrane. In terms of biological role, odorant receptor. This is Olfactory receptor 52B4 (OR52B4) from Homo sapiens (Human).